Consider the following 387-residue polypeptide: N-acetyldiaminopimelate deacetylase (387 aa).

D75 is an active-site residue. The Proton acceptor role is filled by E134.

This sequence belongs to the peptidase M20A family. N-acetyldiaminopimelate deacetylase subfamily.

The enzyme catalyses N-acetyl-(2S,6S)-2,6-diaminopimelate + H2O = (2S,6S)-2,6-diaminopimelate + acetate. It functions in the pathway amino-acid biosynthesis; L-lysine biosynthesis via DAP pathway; LL-2,6-diaminopimelate from (S)-tetrahydrodipicolinate (acetylase route): step 3/3. Catalyzes the conversion of N-acetyl-diaminopimelate to diaminopimelate and acetate. This is N-acetyldiaminopimelate deacetylase from Leuconostoc citreum (strain KM20).